The chain runs to 593 residues: A-type ATP synthase subunit A (593 aa).

Residue 236–243 participates in ATP binding; it reads GPFGSGKT.

Belongs to the ATPase alpha/beta chains family. As to quaternary structure, has multiple subunits with at least A(3), B(3), C, D, E, F, H, I and proteolipid K(x).

The protein localises to the cell membrane. It carries out the reaction ATP + H2O + 4 H(+)(in) = ADP + phosphate + 5 H(+)(out). Functionally, component of the A-type ATP synthase that produces ATP from ADP in the presence of a proton gradient across the membrane. The A chain is the catalytic subunit. The sequence is that of A-type ATP synthase subunit A from Pyrobaculum islandicum (strain DSM 4184 / JCM 9189 / GEO3).